The sequence spans 317 residues: Transaldolase (317 aa).

Lys132 acts as the Schiff-base intermediate with substrate in catalysis.

This sequence belongs to the transaldolase family. Type 1 subfamily. In terms of assembly, homodimer.

It is found in the cytoplasm. It carries out the reaction D-sedoheptulose 7-phosphate + D-glyceraldehyde 3-phosphate = D-erythrose 4-phosphate + beta-D-fructose 6-phosphate. The protein operates within carbohydrate degradation; pentose phosphate pathway; D-glyceraldehyde 3-phosphate and beta-D-fructose 6-phosphate from D-ribose 5-phosphate and D-xylulose 5-phosphate (non-oxidative stage): step 2/3. Its function is as follows. Transaldolase is important for the balance of metabolites in the pentose-phosphate pathway. The protein is Transaldolase of Pseudoalteromonas atlantica (strain T6c / ATCC BAA-1087).